Here is a 73-residue protein sequence, read N- to C-terminus: Guanine nucleotide-binding protein G(I)/G(S)/G(O) subunit gamma-11 (73 aa).

The interval 51 to 73 is disordered; sequence DPLVKGIPEDKNPFKEKGSCVIS. Cysteine methyl ester is present on Cys-70. The S-farnesyl cysteine moiety is linked to residue Cys-70. A propeptide spans 71–73 (removed in mature form); that stretch reads VIS.

This sequence belongs to the G protein gamma family. G proteins are composed of 3 units, alpha, beta and gamma. Interacts with beta-1 and beta-3, but not with beta-2. In terms of tissue distribution, abundantly expressed in all tissues tested except for brain.

The protein localises to the cell membrane. Guanine nucleotide-binding proteins (G proteins) are involved as a modulator or transducer in various transmembrane signaling systems. The beta and gamma chains are required for the GTPase activity, for replacement of GDP by GTP, and for G protein-effector interaction. The protein is Guanine nucleotide-binding protein G(I)/G(S)/G(O) subunit gamma-11 (GNG11) of Homo sapiens (Human).